A 345-amino-acid polypeptide reads, in one-letter code: Opioid-binding protein/cell adhesion molecule (345 aa).

An N-terminal signal peptide occupies residues 1–27 (MGVCGYLFLPWKCLVVVSLRLLFLVPT). 3 consecutive Ig-like C2-type domains span residues 39–126 (PKAM…PKTS), 136–219 (PQIM…VKIT), and 223–310 (PPYI…ASIT). Asn44, Asn70, and Asn140 each carry an N-linked (GlcNAc...) asparagine glycan. Cysteines 57 and 115 form a disulfide. 2 disulfide bridges follow: Cys157-Cys202 and Cys244-Cys296. 3 N-linked (GlcNAc...) asparagine glycosylation sites follow: Asn285, Asn293, and Asn306. The GPI-anchor amidated asparagine moiety is linked to residue Asn322. A propeptide spans 323–345 (SASRALACLWLSGTFFAHFFIKF) (removed in mature form).

This sequence belongs to the immunoglobulin superfamily. IgLON family.

It is found in the cell membrane. Functionally, binds opioids in the presence of acidic lipids; probably involved in cell contact. The polypeptide is Opioid-binding protein/cell adhesion molecule (Opcml) (Rattus norvegicus (Rat)).